Consider the following 545-residue polypeptide: Chaperonin GroEL 1 (545 aa).

ATP contacts are provided by residues 29-32 (TLGP), 86-90 (DGTTT), glycine 413, 479-481 (DAA), and aspartate 495. The segment at 525 to 545 (PEPKENNPAGSGAGMGGDFDY) is disordered. Over residues 535–545 (SGAGMGGDFDY) the composition is skewed to gly residues.

It belongs to the chaperonin (HSP60) family. As to quaternary structure, forms a cylinder of 14 subunits composed of two heptameric rings stacked back-to-back. Interacts with the co-chaperonin GroES.

It localises to the cytoplasm. The catalysed reaction is ATP + H2O + a folded polypeptide = ADP + phosphate + an unfolded polypeptide.. Its function is as follows. Together with its co-chaperonin GroES, plays an essential role in assisting protein folding. The GroEL-GroES system forms a nano-cage that allows encapsulation of the non-native substrate proteins and provides a physical environment optimized to promote and accelerate protein folding. The polypeptide is Chaperonin GroEL 1 (Thermostichus vulcanus (Synechococcus vulcanus)).